Consider the following 817-residue polypeptide: Nuclear hormone receptor family member nhr-48 (817 aa).

The interval 49–91 (YNDDKDDPFYEDEGSGGGTSGGGKKSSRKRANTTSSSGGNEKE) is disordered. Residues 52–62 (DKDDPFYEDEG) show a composition bias toward acidic residues. Residues 63–72 (SGGGTSGGGK) are compositionally biased toward gly residues. Residues 97-172 (NKVCRVCGDK…VGMKKEWIMS (76 aa)) constitute a DNA-binding region (nuclear receptor). 2 consecutive NR C4-type zinc fingers follow at residues 100 to 120 (CRVC…CESC) and 136 to 155 (CPFN…CQRC). The span at 202 to 212 (ACMEDESENSY) shows a compositional bias: acidic residues. Disordered regions lie at residues 202–221 (ACME…PSHQ) and 258–284 (MNFY…SSQL). Residues 273–284 (LPSNSCASSSQL) show a composition bias toward polar residues.

This sequence belongs to the nuclear hormone receptor family.

It is found in the nucleus. In terms of biological role, orphan nuclear receptor. This chain is Nuclear hormone receptor family member nhr-48 (nhr-48), found in Caenorhabditis elegans.